The chain runs to 262 residues: Merozoite surface protein 2 (262 aa).

An N-terminal signal peptide occupies residues 1–20 (MKVIKTLSIINFFIFVTFNI). 2 N-linked (GlcNAc...) asparagine glycosylation sites follow: Asn-22 and Asn-36. A polymorphic region region spans residues 44–188 (AESKPPTGTG…EQTESPELQS (145 aa)). Residues 44–223 (AESKPPTGTG…DSQKECTDGN (180 aa)) are disordered. Gly residues predominate over residues 51-66 (GTGGSGSAGSGAGASA). The span at 67-111 (GNGANPGADAERSPSTPATPATPATTTTTTTTNDAEASTSTSSEN) shows a compositional bias: low complexity. A compositionally biased stretch (basic and acidic residues) spans 112-127 (PNHKNAETNPKGKGEV). Polar residues-rich tracts occupy residues 129–155 (KPNQ…NVPP) and 162–190 (KSPT…QSAP). A glycan (N-linked (GlcNAc...) asparagine) is linked at Asn-139. Asn-211 carries an N-linked (GlcNAc...) asparagine glycan. A disulfide bridge connects residues Cys-219 and Cys-227. 2 N-linked (GlcNAc...) asparagine glycosylation sites follow: Asn-235 and Asn-236. Asn-236 carries GPI-anchor amidated asparagine lipidation. The propeptide at 237–262 (SSNIASINKFVVLISATLVLSFAIFI) is removed in mature form.

The protein localises to the cell membrane. Functionally, may play a role in the merozoite attachment to the erythrocyte. The polypeptide is Merozoite surface protein 2 (Plasmodium falciparum (isolate Camp / Malaysia)).